Here is a 372-residue protein sequence, read N- to C-terminus: F-box/kelch-repeat protein At5g48990 (372 aa).

The 47-residue stretch at 14–60 folds into the F-box domain; sequence SSPNPSLPEDLIVSILARVSRSYYTNLSVVSKTFRSILTSPELYKTR. A Kelch repeat occupies 176-222; sequence RTYFPGSSEKPDSLNCVEVYNTNTQTWNPVPPQKRKLKFGNMEGKIY.

The sequence is that of F-box/kelch-repeat protein At5g48990 from Arabidopsis thaliana (Mouse-ear cress).